Reading from the N-terminus, the 1816-residue chain is Kinesin-like protein KIF1B (1816 aa).

Serine 2 is modified (N-acetylserine). Residues 5–354 form the Kinesin motor domain; that stretch reads SVKVAVRVRP…LRYADRAKQI (350 aa). ATP is bound at residue 97–104; that stretch reads GQTGAGKS. Positions 270 to 350 are interaction with KIFBP; sequence NINKSLTTLG…TLSTLRYADR (81 aa). Coiled coils occupy residues 365–386 and 470–502; these read NAKLVRELKEEVTRLKDLLRAQ and GEEAIERLKESEKIIAELNETWEEKLRKTEAIR. An FHA domain is found at 556 to 612; it reads TRVGQADAERRQDIVLSGAHIKEEHCLFRSERSNTGEVIVTLEPCERSETYVNGKRV. Phosphothreonine occurs at positions 647 and 652. Coiled coils occupy residues 668-737 and 841-869; these read EKQG…EEEV and SLDKLKQRLDLMREMYDRAGEVASSAQDD. A phosphoserine mark is found at serine 1054, serine 1057, serine 1416, serine 1454, and serine 1487. The tract at residues 1522 to 1571 is disordered; that stretch reads VPKSLSDSLSPSLSSGTLSTSTSISSQISTTTFESAITPSESSGYDSADV. A compositionally biased stretch (low complexity) spans 1525–1553; the sequence is SLSDSLSPSLSSGTLSTSTSISSQISTTT. Positions 1554-1566 are enriched in polar residues; the sequence is FESAITPSESSGY. A phosphoserine mark is found at serine 1573, serine 1603, serine 1610, and serine 1613. The segment covering 1620–1637 has biased composition (low complexity); it reads SVSSFSSSTLTPSSTCPS. The tract at residues 1620-1659 is disordered; the sequence is SVSSFSSSTLTPSSTCPSLVDSRSSSMDQKTPEANSRASS. Positions 1640 to 1659 are enriched in polar residues; that stretch reads DSRSSSMDQKTPEANSRASS. The region spanning 1702–1799 is the PH domain; sequence VSKKGYLHFK…WLYAFNPLLA (98 aa).

Belongs to the TRAFAC class myosin-kinesin ATPase superfamily. Kinesin family. Unc-104 subfamily. Monomer. Interacts with KIFBP; positively regulates KIF1B microtubule motor activity. Interacts (via C-terminus end of the kinesin-motor domain) with CHP1; the interaction occurs in a calcium-dependent manner. In terms of assembly, interacts with MADD (via death domain); links this isoform to Rab3-carrying vesicles in anterograde synaptic vesicle transport. Expressed in the brain (at protein level).

The protein localises to the cytoplasm. It localises to the cytoskeleton. It is found in the cytoplasmic vesicle. The protein resides in the secretory vesicle. Its subcellular location is the synaptic vesicle membrane. The protein localises to the mitochondrion. It catalyses the reaction ATP + H2O + a kinesin associated with a microtubule at position (n) = ADP + phosphate a kinesin associated with a microtubule at position (n+1, toward the plus end).. Has a plus-end-directed microtubule motor activity and functions as a motor for transport of vesicles and organelles along microtubules. Functionally, has a plus-end-directed microtubule motor activity and functions as a motor for anterograde synaptic vesicle transport along axonal microtubules from the cell body to the presynapse in neuronal cells. Functions as a downstream effector in a developmental apoptotic pathway that is activated when nerve growth factor (NGF) becomes limiting for neuronal progenitor cells. Its function is as follows. Has a plus-end-directed microtubule motor activity and functions as a motor for anterograde transport of mitochondria. The protein is Kinesin-like protein KIF1B of Mus musculus (Mouse).